The primary structure comprises 815 residues: Vacuolar proton translocating ATPase 100 kDa subunit (815 aa).

At 1–402 (MSFLRPSIWR…NAYGIAHYRE (402 aa)) the chain is on the cytoplasmic side. The chain crosses the membrane as a helical span at residues 403 to 421 (VNPAVLTIVTFPFLFGVMF). Over 422 to 423 (GD) the chain is Vacuolar. A helical transmembrane segment spans residues 424–440 (VGHGALLLLSALGLISL). At 441-454 (EKKLAGKKLNELIQ) the chain is on the cytoplasmic side. A helical membrane pass occupies residues 455 to 484 (MPFDGRYVLFLMSLFSIYVGFIYNECFSIP). Over 485–530 (MNIFGSQYNLNSTTGLYTYQHTDRVYPVGVDPLWKGAPNELVYYNS) the chain is Vacuolar. The helical transmembrane segment at 531-550 (FKMKLSIIFGVVQMSVGICF) threads the bilayer. Residues 551-571 (SLLNYLNQKGPIKIVNILTQF) lie on the Cytoplasmic side of the membrane. The chain crosses the membrane as a helical span at residues 572–592 (VPQMIFLWSIFGYMSVLIILK). Residues 593–639 (WVVPYRSFEVDKVDPPFILPTIIAMFLSPGGTPDVVFFSGQGAVQTA) lie on the Vacuolar side of the membrane. A helical transmembrane segment spans residues 640–659 (LLFLALISIPVMLVIKPLFM). At 660-706 (KRFHFQEVERKKLGHHEEEHDDEALYTGHHGEEFEMGEVFVHQVIHT) the chain is on the cytoplasmic side. Residues 707–731 (IEFVLGAVSNTASYLRLWALSLAHS) form a helical membrane-spanning segment. At 732–749 (ELSSVFWERILIGQVERG) the chain is on the vacuolar side. Residues 750-788 (NPFLAFVGFGAWLGASVAVLLLMESLSAFLHALRLHWVE) traverse the membrane as a helical segment. The Cytoplasmic portion of the chain corresponds to 789 to 815 (FQNKFYIGDGVRFIPYSATRILSEDDE).

Belongs to the V-ATPase 116 kDa subunit family. As to quaternary structure, the V-ATPase is a heteromultimeric enzyme.

The protein localises to the cytoplasmic vesicle membrane. It is found in the endosome membrane. The protein resides in the vacuole membrane. It localises to the lysosome membrane. Essential component of the vacuolar proton pump (V-ATPase), a multimeric enzyme that catalyzes the translocation of protons across the membranes. Required for assembly and activity of the V-ATPase. Required in both the contractile vacuole system and the endosomal/lysosomal system. Also required for cytosolic pH regulation. This chain is Vacuolar proton translocating ATPase 100 kDa subunit (vatM), found in Dictyostelium discoideum (Social amoeba).